We begin with the raw amino-acid sequence, 335 residues long: MNELTYLQTMPKQTALLKTHCADFVVKEQLGYEMSGDGEFVAVKVRKTDCNTLFVAEKLAHFAGIPAKNMGYAGLKDRKAITEQWFCLQMPGQPTPDFNQFQLDGVEILEVTRHNRKIRTGSLDGNHFEILLREAQENADLKVRLENIKKNGFPNYFTEQRFGRDGHNLTQALRWAKGEINVKDRKKRSFYLSAARSEIFNLIVSARIRQGLHHKILVNDILQLSGSHSWFHADQKEDFNLLQQRLAQQDIQITAPLIGENVQIASDVENEIIAKHQELLYLMHQEKMKSARRPILMQAQHLSWSFIPEGLKLTFYLPAGSYATALVRELVNINE.

Aspartate 77 serves as the catalytic Nucleophile. Positions 152–308 (GFPNYFTEQR…AQHLSWSFIP (157 aa)) constitute a TRUD domain.

The protein belongs to the pseudouridine synthase TruD family.

It catalyses the reaction uridine(13) in tRNA = pseudouridine(13) in tRNA. In terms of biological role, responsible for synthesis of pseudouridine from uracil-13 in transfer RNAs. This Histophilus somni (strain 129Pt) (Haemophilus somnus) protein is tRNA pseudouridine synthase D.